The primary structure comprises 147 residues: Small ribosomal subunit protein uS5 (147 aa).

An S5 DRBM domain is found at 9 to 72 (FEEVIVDIGR…DDAFKNIIHV (64 aa)).

It belongs to the universal ribosomal protein uS5 family. Part of the 30S ribosomal subunit. Contacts proteins S4 and S8.

In terms of biological role, with S4 and S12 plays an important role in translational accuracy. Functionally, located at the back of the 30S subunit body where it stabilizes the conformation of the head with respect to the body. The chain is Small ribosomal subunit protein uS5 from Campylobacter curvus (strain 525.92).